The primary structure comprises 787 residues: MQAFGPPNEGPLQGLVASRIETYGGRHQTSAHSTAGNLFPRGGPGVDPSRRRLQHYVPFAKGSGQTRGMSPLVLREPDPEKRHGSYFGVGPPHSPKLKEVTRAHELEIRLHTFSMFGMPRLPPEDRRHWEIGEGGDSALTMEKSWKELVLEHKEMNRQLCHQQEALWELLTTELIYLRKLKIMTDLLAAGLLNLQRVGLLTEVSAETLFGNVPNLIRAHRRFWEEVLQPILEDTRTSGQPLDPVSLQNGFLTFGQRFQPYVQYCLRVKQTMAYAREQQDTNPLFHTFVQWCEKHKRSGRQTLGDLLIKPHQRITKYPLLLQAVRKRSPEPRAQEALNAMIEAVESFLRHINGQVRQGEEQESLMAVAQRIGPYEVLEPSSEEVEKNLRPFSTLDLMTPVLGVAPEYTRQLLLEGPVRVKEGREGKMDVYLFLFSDVLLVTKPQRKADRAKVIRPPLMLEKLVCRPLRDPNSFLLIHLTEFQCVSSALTVHCPSSTERARWLEKTQHAQTTLQKLKGEQYIQQKRELLALYRNQGTESPSTRPSTPSPSPEDSQSSAEGRTLEFAIIPRLVVTEDTDEDTPSMPDDASDSGYGTLIPSSPKDSHSPLNRLRSKALRRDPRLTFSTLELRDVPLRPQPPDPQAPQRRSAPELPEGILRGGSLPRRAPPIWSEEEDETLASGNVVVETLHRAQRRSPLPHSPTHTDSAGESPWESSDEDEGLLSPELRPRSLREDMLREIREELANQRIDGASEPEPGNGKPRRLTLAQLQRMRVPHIIQLDTPLSTSEV.

Positions His-161–Gln-353 constitute a DH domain. One can recognise a PH domain in the interval Gln-409–Thr-509. The interval Gln-533 to Leu-762 is disordered. Positions Thr-535–Glu-557 are enriched in low complexity. Residues Leu-724–Ala-742 are compositionally biased toward basic and acidic residues.

Interacts with MYH10. Interacts with ELMO1 and EZR (in an open conformation). Interacts with CSPP1.

The protein localises to the cell projection. It is found in the microvillus. Its subcellular location is the cytoplasm. It localises to the cytoskeleton. The protein resides in the spindle. The protein localises to the cleavage furrow. In terms of biological role, guanine nucleotide exchange factor activating the small GTPase RHOA, which, in turn, induces myosin filament formation. Also activates RHOG. Does not activate RAC1, or to a much lower extent than RHOA and RHOG. Part of a functional unit, involving PLEKHG6, MYH10 and RHOA, at the cleavage furrow to advance furrow ingression during cytokinesis. In epithelial cells, required for the formation of microvilli and membrane ruffles on the apical pole. Along with EZR, required for normal macropinocytosis. The chain is Pleckstrin homology domain-containing family G member 6 (Plekhg6) from Mus musculus (Mouse).